A 333-amino-acid chain; its full sequence is 4-hydroxy-2-oxovalerate aldolase (333 aa).

One can recognise a Pyruvate carboxyltransferase domain in the interval 4 to 254 (VKIFDLTLRD…DCGIDLYKTM (251 aa)). A substrate-binding site is contributed by 12-13 (RD). Residue D13 participates in Mn(2+) binding. H16 acts as the Proton acceptor in catalysis. Substrate is bound at residue H193. Residues H193 and H195 each coordinate Mn(2+). Residue Y284 coordinates substrate.

It belongs to the 4-hydroxy-2-oxovalerate aldolase family.

The enzyme catalyses (S)-4-hydroxy-2-oxopentanoate = acetaldehyde + pyruvate. This is 4-hydroxy-2-oxovalerate aldolase from Desulfitobacterium hafniense (strain DSM 10664 / DCB-2).